An 86-amino-acid chain; its full sequence is Large ribosomal subunit protein bL31B (86 aa).

The protein belongs to the bacterial ribosomal protein bL31 family. Type B subfamily. In terms of assembly, part of the 50S ribosomal subunit.

In Streptococcus pyogenes serotype M1, this protein is Large ribosomal subunit protein bL31B.